Consider the following 151-residue polypeptide: Arginine repressor (151 aa).

The protein belongs to the ArgR family.

It localises to the cytoplasm. It participates in amino-acid biosynthesis; L-arginine biosynthesis [regulation]. Regulates arginine biosynthesis genes. The polypeptide is Arginine repressor (Haemophilus influenzae (strain PittGG)).